The sequence spans 151 residues: Protein SprT-like (151 aa).

A SprT-like domain is found at 6–147 (LQRMVENLSE…GHCNGKLRMK (142 aa)). Residue His-67 participates in Zn(2+) binding. Glu-68 is a catalytic residue. His-71 is a binding site for Zn(2+).

This sequence belongs to the SprT family. Requires Zn(2+) as cofactor.

Its subcellular location is the cytoplasm. This chain is Protein SprT-like, found in Staphylococcus aureus (strain MRSA252).